We begin with the raw amino-acid sequence, 469 residues long: Glutamate--tRNA ligase (469 aa).

The 'HIGH' region signature appears at 9–19 (PSPTGFLHVGG). Residues Cys98, Cys100, Cys125, and Asp127 each contribute to the Zn(2+) site. Positions 236-240 (KLSKR) match the 'KMSKS' region motif. ATP is bound at residue Lys239.

It belongs to the class-I aminoacyl-tRNA synthetase family. Glutamate--tRNA ligase type 1 subfamily. Monomer. The cofactor is Zn(2+).

The protein resides in the cytoplasm. The enzyme catalyses tRNA(Glu) + L-glutamate + ATP = L-glutamyl-tRNA(Glu) + AMP + diphosphate. Catalyzes the attachment of glutamate to tRNA(Glu) in a two-step reaction: glutamate is first activated by ATP to form Glu-AMP and then transferred to the acceptor end of tRNA(Glu). This Shewanella baltica (strain OS155 / ATCC BAA-1091) protein is Glutamate--tRNA ligase.